Consider the following 583-residue polypeptide: DNA ligase (583 aa).

An ATP-binding site is contributed by Glu-249. Lys-251 functions as the N6-AMP-lysine intermediate in the catalytic mechanism. ATP-binding residues include Arg-256, Arg-271, Glu-301, Phe-341, Arg-416, and Lys-422.

It belongs to the ATP-dependent DNA ligase family. Requires Mg(2+) as cofactor.

It catalyses the reaction ATP + (deoxyribonucleotide)n-3'-hydroxyl + 5'-phospho-(deoxyribonucleotide)m = (deoxyribonucleotide)n+m + AMP + diphosphate.. Its function is as follows. DNA ligase that seals nicks in double-stranded DNA during DNA replication, DNA recombination and DNA repair. The sequence is that of DNA ligase from Pyrobaculum calidifontis (strain DSM 21063 / JCM 11548 / VA1).